Reading from the N-terminus, the 190-residue chain is Elongation factor P 2 (190 aa).

The protein belongs to the elongation factor P family.

It localises to the cytoplasm. It functions in the pathway protein biosynthesis; polypeptide chain elongation. Its function is as follows. Involved in peptide bond synthesis. Stimulates efficient translation and peptide-bond synthesis on native or reconstituted 70S ribosomes in vitro. Probably functions indirectly by altering the affinity of the ribosome for aminoacyl-tRNA, thus increasing their reactivity as acceptors for peptidyl transferase. The chain is Elongation factor P 2 (efp2) from Chlamydia muridarum (strain MoPn / Nigg).